The sequence spans 181 residues: Ribosome maturation factor RimM (181 aa).

The PRC barrel domain occupies 97 to 170; the sequence is AGEFWLPDLM…RIEVVAIPGL (74 aa).

It belongs to the RimM family. In terms of assembly, binds ribosomal protein uS19.

It localises to the cytoplasm. An accessory protein needed during the final step in the assembly of 30S ribosomal subunit, possibly for assembly of the head region. Essential for efficient processing of 16S rRNA. May be needed both before and after RbfA during the maturation of 16S rRNA. It has affinity for free ribosomal 30S subunits but not for 70S ribosomes. This chain is Ribosome maturation factor RimM, found in Gloeobacter violaceus (strain ATCC 29082 / PCC 7421).